The following is a 430-amino-acid chain: Mannosylglucosylglycerate synthase (430 aa).

It belongs to the glycosyltransferase group 1 family. The cofactor is a divalent metal cation.

The enzyme catalyses (2R)-2-O-(alpha-D-glucopyranosyl)-glycerate + GDP-alpha-D-mannose = (2R)-2-O-[alpha-D-mannopyranosyl-(1-&gt;2)-alpha-D-glucopyranosyl]-glycerate + GDP + H(+). In terms of biological role, involved in the biosynthesis of the compatible solute mannosylglucosylglycerate through a nonphosphorylating pathway. Catalyzes the synthesis of mannosylglucosylglycerate (MGG) from glucosylglycerate (GG) and GDP-mannose. The sequence is that of Mannosylglucosylglycerate synthase from Petrotoga mobilis (strain DSM 10674 / SJ95).